Reading from the N-terminus, the 231-residue chain is Small ribosomal subunit protein uS3c (231 aa).

Residues 39-123 (LRNFIKKKYI…HLRLSVKPLR (85 aa)) enclose the KH type-2 domain.

It belongs to the universal ribosomal protein uS3 family. Part of the 30S ribosomal subunit.

The protein resides in the plastid. It is found in the chloroplast. This Chlorella vulgaris (Green alga) protein is Small ribosomal subunit protein uS3c (rps3).